The following is a 42-amino-acid chain: Photosystem II reaction center protein J (42 aa).

Residues 10 to 30 (IPLWLVGTVVGIAALTLLSVF) form a helical membrane-spanning segment.

Belongs to the PsbJ family. As to quaternary structure, PSII is composed of 1 copy each of membrane proteins PsbA, PsbB, PsbC, PsbD, PsbE, PsbF, PsbH, PsbI, PsbJ, PsbK, PsbL, PsbM, PsbT, PsbX, PsbY, PsbZ, Psb30/Ycf12, at least 3 peripheral proteins of the oxygen-evolving complex and a large number of cofactors. It forms dimeric complexes.

Its subcellular location is the plastid. It localises to the chloroplast thylakoid membrane. One of the components of the core complex of photosystem II (PSII). PSII is a light-driven water:plastoquinone oxidoreductase that uses light energy to abstract electrons from H(2)O, generating O(2) and a proton gradient subsequently used for ATP formation. It consists of a core antenna complex that captures photons, and an electron transfer chain that converts photonic excitation into a charge separation. This chain is Photosystem II reaction center protein J, found in Tupiella akineta (Green alga).